The following is a 463-amino-acid chain: MEHVIGGKFKLGRKIGSGSFGELYLGVNIQSSEEVAIKLESVKSRHPQLHYESKLYMLLQGGTGIPHLKWFGVEGEYNVMVIDLLGPSLEDLFNYCNRKFSLKTVLMLADQMINRVEYMHTRGFLHRDIKPDNFLMGLGRKASQVYVIDYGLAKKYRDLQTHKHIPYRENKNLTGTARYASVNTHLGVEQSRRDDLESLGYVLMYFLRGSLPWQGLKAGTKKQKYDKISEKKMLTPVEVLCKSYPTEFISYFHYCRSLRFEDKPDYSYLKRLFRDLFIREGYQLDYIFDWTKQGSESNRLRSSGRTSGLVGPSAERTERAAARQDVPDRFSGTVDPFARRTGSGSGHYGEHTKHRNILDSLLAPKTAVDLDKRRPTSSSRNGSTSRKALLSSSRPSSGDPIDPNRSNLIPTSSGSSRPSTMQRLHQSTGLETRSSLTKTARNVHDDPTLRTFERLSISADRRK.

The Protein kinase domain occupies 9–278; the sequence is FKLGRKIGSG…LKRLFRDLFI (270 aa). Residues 15 to 23 and lysine 38 contribute to the ATP site; that span reads IGSGSFGEL. Aspartate 128 (proton acceptor) is an active-site residue. Polar residues predominate over residues 296–306; that stretch reads ESNRLRSSGRT. The disordered stretch occupies residues 296 to 448; sequence ESNRLRSSGR…TARNVHDDPT (153 aa). Residues 315–328 are compositionally biased toward basic and acidic residues; sequence ERTERAAARQDVPD. Polar residues-rich tracts occupy residues 376 to 396 and 404 to 440; these read TSSS…SRPS and NRSN…TKTA.

It belongs to the protein kinase superfamily. CK1 Ser/Thr protein kinase family. Casein kinase I subfamily. In terms of assembly, monomer. In terms of processing, autophosphorylated. In terms of tissue distribution, expressed in leaves, stems, panicles and seeds. Expressed in root tissues and lamina joints.

It is found in the cytoplasm. The protein localises to the nucleus. It carries out the reaction L-seryl-[protein] + ATP = O-phospho-L-seryl-[protein] + ADP + H(+). The enzyme catalyses L-threonyl-[protein] + ATP = O-phospho-L-threonyl-[protein] + ADP + H(+). Its activity is regulated as follows. Inhibited by N-(2-aminoethyl)-5-chloroisoquinoline-8-sulfonamide (CKI-7). Functionally, casein kinases are operationally defined by their preferential utilization of acidic proteins such as caseins as substrates. Can phosphorylate casein in vitro. Required for normal root development through modulation of cell elongation. Plants silencing CKI1 show abnormal root development, with reduced number of lateral and adventitious roots, and shortened primary roots as a result of reduced cell elongation. May be involved in abscisic acid (ABA) and brassinosteroid (BR) signaling pathways. Plays an important role in the adaptive growth and fitness under low temperature (LT) conditions. May confer tolerance to LT through an auxin-dependent process. The sequence is that of Casein kinase 1 (CKI1) from Oryza sativa subsp. japonica (Rice).